The sequence spans 65 residues: Large ribosomal subunit protein bL35 (65 aa).

It belongs to the bacterial ribosomal protein bL35 family.

This is Large ribosomal subunit protein bL35 from Blochmanniella pennsylvanica (strain BPEN).